A 206-amino-acid polypeptide reads, in one-letter code: Uracil phosphoribosyltransferase (206 aa).

5-phospho-alpha-D-ribose 1-diphosphate-binding positions include R76, R101, and 128–136 (DPMLATGTT). Residues I191 and 196-198 (GDA) each bind uracil. D197 is a binding site for 5-phospho-alpha-D-ribose 1-diphosphate.

The protein belongs to the UPRTase family. Requires Mg(2+) as cofactor.

It catalyses the reaction UMP + diphosphate = 5-phospho-alpha-D-ribose 1-diphosphate + uracil. Its pathway is pyrimidine metabolism; UMP biosynthesis via salvage pathway; UMP from uracil: step 1/1. Its activity is regulated as follows. Allosterically activated by GTP. Functionally, catalyzes the conversion of uracil and 5-phospho-alpha-D-ribose 1-diphosphate (PRPP) to UMP and diphosphate. The sequence is that of Uracil phosphoribosyltransferase from Mycoplasma genitalium (strain ATCC 33530 / DSM 19775 / NCTC 10195 / G37) (Mycoplasmoides genitalium).